Consider the following 422-residue polypeptide: Glycine amidinotransferase, mitochondrial (422 aa).

The transit peptide at Met-1–Gln-37 directs the protein to the mitochondrion. Active-site residues include Asp-253 and His-302. Cys-406 serves as the catalytic Amidino-cysteine intermediate.

It belongs to the amidinotransferase family. In terms of assembly, homodimer. In terms of tissue distribution, ubiquitously expressed in adult tissues, with highest levels in muscle and intermediate levels in eye, heart, liver, stomach and testis. In stage 28 embryos, expression is higher in the dorsal and ventral parts of the trunk than in the head. In middle gastrulae, expression is highest around the yolk plug, while in stage 15 and tailbud stage embryos, expression is largely restricted to the region around the presumptive notochord and gut.

It localises to the mitochondrion inner membrane. The enzyme catalyses L-arginine + glycine = guanidinoacetate + L-ornithine. It functions in the pathway amine and polyamine biosynthesis; creatine biosynthesis; creatine from L-arginine and glycine: step 1/2. Functionally, catalyzes the biosynthesis of guanidinoacetate, the immediate precursor of creatine. Creatine plays a vital role in energy metabolism in muscle tissues. May play a role in embryonic and central nervous system development. This is Glycine amidinotransferase, mitochondrial from Xenopus laevis (African clawed frog).